A 42-amino-acid polypeptide reads, in one-letter code: Photosystem II reaction center protein J (42 aa).

A helical transmembrane segment spans residues 10–30 (IPLWLVGTVAGTAALTLVAVF).

This sequence belongs to the PsbJ family. As to quaternary structure, PSII is composed of 1 copy each of membrane proteins PsbA, PsbB, PsbC, PsbD, PsbE, PsbF, PsbH, PsbI, PsbJ, PsbK, PsbL, PsbM, PsbT, PsbX, PsbY, PsbZ, Psb30/Ycf12, at least 3 peripheral proteins of the oxygen-evolving complex and a large number of cofactors. It forms dimeric complexes.

It is found in the plastid. The protein localises to the chloroplast thylakoid membrane. Functionally, one of the components of the core complex of photosystem II (PSII). PSII is a light-driven water:plastoquinone oxidoreductase that uses light energy to abstract electrons from H(2)O, generating O(2) and a proton gradient subsequently used for ATP formation. It consists of a core antenna complex that captures photons, and an electron transfer chain that converts photonic excitation into a charge separation. This Chlorella vulgaris (Green alga) protein is Photosystem II reaction center protein J.